A 239-amino-acid polypeptide reads, in one-letter code: Fatty acid metabolism regulator protein (239 aa).

The HTH gntR-type domain maps to Gln-6 to Phe-74. A DNA-binding region (H-T-H motif) is located at residues Glu-34–Gln-53.

Homodimer.

The protein resides in the cytoplasm. In terms of biological role, multifunctional regulator of fatty acid metabolism. The protein is Fatty acid metabolism regulator protein of Pectobacterium carotovorum subsp. carotovorum (strain PC1).